The sequence spans 236 residues: MHLRPSPQSPQSACCNPELPATEPPTPAEHPTAFRRSQAPSRTPRTFSRETLHILRENRCLAVSKVVHTPDIPPKTPASQAASNRAHRTAKHPARRQSCKLKAPNPCVGHPLRIPSPKHSPRHCTLHDIRHRKKLHPLNNPKGANKRKTPPLIQPTVLEPLPHPVLSPHNISSSTDHPDPSPAIKPSPPNNTRHILLTTKSLLLILTHPIISAYPFHPYFSFTPHEHHIRSRDTQN.

3 disordered regions span residues 1–48 (MHLR…RTFS), 67–122 (VHTP…HSPR), and 134–192 (KLHP…PNNT). The span at 85-99 (RAHRTAKHPARRQSC) shows a compositional bias: basic residues. The segment covering 180-189 (PSPAIKPSPP) has biased composition (pro residues).

This is an uncharacterized protein from Encephalitozoon cuniculi (strain GB-M1) (Microsporidian parasite).